Here is a 135-residue protein sequence, read N- to C-terminus: UPF0306 protein C8J_1355 (135 aa).

It belongs to the UPF0306 family.

This is UPF0306 protein C8J_1355 from Campylobacter jejuni subsp. jejuni serotype O:6 (strain 81116 / NCTC 11828).